Here is a 182-residue protein sequence, read N- to C-terminus: Large ribosomal subunit protein bL25 (182 aa).

The protein belongs to the bacterial ribosomal protein bL25 family. CTC subfamily. As to quaternary structure, part of the 50S ribosomal subunit; part of the 5S rRNA/L5/L18/L25 subcomplex. Contacts the 5S rRNA. Binds to the 5S rRNA independently of L5 and L18.

Functionally, this is one of the proteins that binds to the 5S RNA in the ribosome where it forms part of the central protuberance. This is Large ribosomal subunit protein bL25 from Borreliella burgdorferi (strain ATCC 35210 / DSM 4680 / CIP 102532 / B31) (Borrelia burgdorferi).